Here is a 236-residue protein sequence, read N- to C-terminus: uncharacterized protein (236 aa).

3 disordered regions span residues 1–48 (MHLR…RTFS), 67–122 (VHTP…HSPR), and 134–192 (KLHP…PNNT). A compositionally biased stretch (basic residues) spans 85–99 (RAHRTAKHPARRQSC). Positions 180 to 189 (PSPAIKPSPP) are enriched in pro residues.

This is an uncharacterized protein from Encephalitozoon cuniculi (strain GB-M1) (Microsporidian parasite).